The following is a 253-amino-acid chain: Redox-sensing transcriptional repressor Rex (253 aa).

Positions Leu26–Leu65 form a DNA-binding region, H-T-H motif. Residue Gly100–Gly105 participates in NAD(+) binding. Residues Arg217–Ala253 form a disordered region.

The protein belongs to the transcriptional regulatory Rex family. In terms of assembly, homodimer.

The protein resides in the cytoplasm. Its function is as follows. Modulates transcription in response to changes in cellular NADH/NAD(+) redox state. The protein is Redox-sensing transcriptional repressor Rex of Streptomyces griseus subsp. griseus (strain JCM 4626 / CBS 651.72 / NBRC 13350 / KCC S-0626 / ISP 5235).